A 1300-amino-acid chain; its full sequence is Zinc finger protein 536 (1300 aa).

Disordered regions lie at residues 1 to 26 (MEEA…GPVL) and 47 to 77 (FPEL…GQPM). Over residues 48-69 (PELHPRPNPEEKPPASLEEKAH) the composition is skewed to basic and acidic residues. 6 C2H2-type zinc fingers span residues 130-152 (YPCP…MRTH), 158-180 (FKCP…LRTH), 274-297 (FRCT…RILH), 300-323 (YKCT…EKAH), 345-367 (FRCE…MRKH), and 373-395 (HCCQ…MKVH). Disordered regions lie at residues 584–604 (HSTK…LESS) and 650–739 (SRVH…QQPA). The span at 594 to 604 (LPSKLDPLESS) shows a compositional bias: basic and acidic residues. The C2H2-type 7 zinc-finger motif lies at 631–653 (TECPDCGRVFRTYHQVVVHSRVH). The span at 657–674 (RKGEEDGLHVGLDERRGS) shows a compositional bias: basic and acidic residues. A compositionally biased stretch (polar residues) spans 675–696 (GSDQESQSVSRSTTPGSSNVTE). 2 consecutive C2H2-type zinc fingers follow at residues 751 to 773 (KDCP…LRIH) and 779 to 801 (YKCP…LERH). A disordered region spans residues 802-826 (HRERQNGAGPLSGQPPNQDHKDEMS). Residues Ser826 and Ser827 each carry the phosphoserine modification. Positions 856–880 (SQQWTSGVLSSGDHSGQATGMSSEV) are enriched in polar residues. Disordered stretches follow at residues 856 to 893 (SQQW…LPSK), 937 to 985 (KDKA…PDAA), and 1124 to 1260 (SGAS…SLDK). Basic and acidic residues-rich tracts occupy residues 950–972 (HGVD…EKSQ) and 1133–1143 (KEPDGKAHSEE). 2 stretches are compositionally biased toward acidic residues: residues 1160 to 1170 (DLSDIASSEDM) and 1178 to 1187 (NDEEDVETEP). The span at 1194–1209 (LSALSKDSSSDGGDSL) shows a compositional bias: low complexity.

This sequence belongs to the krueppel C2H2-type zinc-finger protein family.

The protein localises to the nucleus. Transcriptional repressor that negatively regulates neuron differentiation by repressing retinoic acid-induced gene transcription. Binds and interrupts RARA from binding to retinoic acid response elements (RARE) composed of tandem 5'-AGGTCA-3' sites known as DR1-DR5. Recognizes and binds 2 copies of the core DNA sequence 5'-CCCCCA-3'. This is Zinc finger protein 536 (ZNF536) from Homo sapiens (Human).